Consider the following 318-residue polypeptide: Coproporphyrin III ferrochelatase (318 aa).

Fe(2+) contacts are provided by histidine 186 and glutamate 268.

The protein belongs to the ferrochelatase family.

It is found in the cytoplasm. The enzyme catalyses Fe-coproporphyrin III + 2 H(+) = coproporphyrin III + Fe(2+). It participates in porphyrin-containing compound metabolism; protoheme biosynthesis. Its function is as follows. Involved in coproporphyrin-dependent heme b biosynthesis. Catalyzes the insertion of ferrous iron into coproporphyrin III to form Fe-coproporphyrin III. The sequence is that of Coproporphyrin III ferrochelatase from Lactococcus lactis subsp. cremoris (strain SK11).